Consider the following 343-residue polypeptide: C-X-C chemokine receptor type 6 (343 aa).

Residues 1-33 (MAEYDHYEDDGFLNSFNDSSQEEHQDFLQFRKV) are Extracellular-facing. N-linked (GlcNAc...) asparagine glycosylation occurs at asparagine 17. A helical membrane pass occupies residues 34–60 (FLPCMYLVVFVCGLVGNSLVLVISIFY). The Cytoplasmic segment spans residues 61–69 (HKLQSLTDV). A helical transmembrane segment spans residues 70–90 (FLVNLPLADLVFVCTLPFWTY). Residues 91–104 (AGIHEWIFGQVMCK) are Extracellular-facing. Residues cysteine 103 and cysteine 181 are joined by a disulfide bond. A helical transmembrane segment spans residues 105–126 (TLLGVYTINFYTSMLILTCITV). Over 127-144 (DRFIVVVKATKAYNQQAK) the chain is Cytoplasmic. A helical membrane pass occupies residues 145–165 (RMTWGKVICLLIWVISLLVSL). Residues 166–188 (PQIIYGNVFNLDKLICGYHDEEI) are Extracellular-facing. A helical transmembrane segment spans residues 189 to 216 (STVVLATQMTLGFFLPLLAMIVCYSVII). The Cytoplasmic portion of the chain corresponds to 217–232 (KTLLHAGGFQKHRSLK). Residues 233–260 (IIFLVMAVFLLTQTPFNLVKLIRSTRWE) traverse the membrane as a helical segment. Topologically, residues 261–276 (YYAMTSFHYTIIVTEA) are extracellular. A helical membrane pass occupies residues 277–294 (IAYLRACLNPVLYAFVSL). The Cytoplasmic portion of the chain corresponds to 295 to 343 (KFRKNFWKLVKDIGCLPYLGVSHQWKSSEDNSKTFSASHNVEATSMFQL).

It belongs to the G-protein coupled receptor 1 family.

It is found in the cell membrane. In terms of biological role, receptor for the C-X-C chemokine CXCL16. Used as a coreceptor by SIVs and by strains of HIV-2 and m-tropic HIV-1. The protein is C-X-C chemokine receptor type 6 (CXCR6) of Macaca fascicularis (Crab-eating macaque).